Consider the following 935-residue polypeptide: C-1-tetrahydrofolate synthase, cytoplasmic (935 aa).

The residue at position 1 (M1) is an N-acetylmethionine. The interval 2–291 (APAGILNGKL…MLMQSTVESA (290 aa)) is methylenetetrahydrofolate dehydrogenase and methenyltetrahydrofolate cyclohydrolase (D/C) domain. Substrate-binding positions include 52-56 (YINVK) and 99-101 (VQL). K56 is a catalytic residue. NADP(+) contacts are provided by residues 172-174 (GRS) and S197. 272–276 (PGGVG) contributes to the substrate binding site. The segment at 310 to 935 (LNLKTPVPSD…PETEQVNGLF (626 aa)) is formyltetrahydrofolate synthetase domain. S318 bears the Phosphoserine mark. Position 380–387 (380–387 (TPLGEGKS)) interacts with ATP. Phosphoserine occurs at positions 413 and 490.

The protein in the N-terminal section; belongs to the tetrahydrofolate dehydrogenase/cyclohydrolase family. In the C-terminal section; belongs to the formate--tetrahydrofolate ligase family. As to quaternary structure, homodimer.

It is found in the cytoplasm. The catalysed reaction is (6R)-5,10-methylene-5,6,7,8-tetrahydrofolate + NADP(+) = (6R)-5,10-methenyltetrahydrofolate + NADPH. The enzyme catalyses (6R)-5,10-methenyltetrahydrofolate + H2O = (6R)-10-formyltetrahydrofolate + H(+). It carries out the reaction (6S)-5,6,7,8-tetrahydrofolate + formate + ATP = (6R)-10-formyltetrahydrofolate + ADP + phosphate. It functions in the pathway one-carbon metabolism; tetrahydrofolate interconversion. Trifunctional enzyme that catalyzes the interconversion of three forms of one-carbon-substituted tetrahydrofolate: (6R)-5,10-methylene-5,6,7,8-tetrahydrofolate, 5,10-methenyltetrahydrofolate and (6S)-10-formyltetrahydrofolate. These derivatives of tetrahydrofolate are differentially required in nucleotide and amino acid biosynthesis, (6S)-10-formyltetrahydrofolate being required for purine biosynthesis while (6R)-5,10-methylene-5,6,7,8-tetrahydrofolate is used for serine and methionine biosynthesis for instance. This Mus musculus (Mouse) protein is C-1-tetrahydrofolate synthase, cytoplasmic (Mthfd1).